Consider the following 86-residue polypeptide: RQC P-site tRNA stabilizing factor (86 aa).

Residues 1 to 62 form the S4 RNA-binding domain; sequence MRLDKFLKVS…QKLVTVQVNE (62 aa).

It belongs to the RqcP family. Associates with stalled 50S ribosomal subunits. Binds to RqcH, 23S rRNA and the P-site tRNA. Does not require RqcH for association with 50S subunits. Crystallized 50S subunits are variously associated with an A/P-site tRNA with or without RqcH, as well as with P- and E-site tRNAs but no RqcH. Displaced from the 50S subunit by puromycin but not thiostrepton.

Its function is as follows. Key component of the ribosome quality control system (RQC), a ribosome-associated complex that mediates the extraction of incompletely synthesized nascent chains from stalled ribosomes and their subsequent degradation. RqcH recruits Ala-charged tRNA, and with RqcP directs the elongation of stalled nascent chains on 50S ribosomal subunits, leading to non-templated C-terminal alanine extensions (Ala tail). The Ala tail promotes nascent chain degradation. RqcP is associated with the translocation-like movement of the peptidyl-tRNA from the A-site into the P-site. RqcH, RqcP and charged tRNA(Ala) are necessary and sufficient to add an Ala tail to a model stalled nascent peptide; does not add Val. The sequence is that of RQC P-site tRNA stabilizing factor from Bacillus subtilis (strain 168).